A 200-amino-acid chain; its full sequence is Small heat shock protein hspG2 (200 aa).

In terms of domain architecture, sHSP spans 33 to 200 (NKRIDIIPSM…DNFQIKLKSI (168 aa)). The segment at 86–139 (KLQQQQQQQSEKSSQSTNNKDDDEPSIEEYEDDTKLKSNLNKNTENKDENKTTS) is disordered. Residues 88–101 (QQQQQQQSEKSSQS) are compositionally biased toward low complexity. The span at 106–117 (DDDEPSIEEYED) shows a compositional bias: acidic residues.

The protein belongs to the small heat shock protein (HSP20) family.

This chain is Small heat shock protein hspG2 (hspG2), found in Dictyostelium discoideum (Social amoeba).